A 641-amino-acid chain; its full sequence is Methionine--tRNA ligase (641 aa).

The short motif at 13–23 is the 'HIGH' region element; the sequence is YYPSAKLHIGN. 4 residues coordinate Zn(2+): Cys-128, Cys-131, Cys-145, and Cys-148. The short motif at 298-302 is the 'KMSKS' region element; sequence KMSKS. Residue Lys-301 participates in ATP binding. One can recognise a tRNA-binding domain in the interval 539–641; it reads DFDKIDLRVV…GELPTGSQVR (103 aa).

Belongs to the class-I aminoacyl-tRNA synthetase family. MetG type 2A subfamily. Homodimer. The cofactor is Zn(2+).

It localises to the cytoplasm. The enzyme catalyses tRNA(Met) + L-methionine + ATP = L-methionyl-tRNA(Met) + AMP + diphosphate. Its function is as follows. Is required not only for elongation of protein synthesis but also for the initiation of all mRNA translation through initiator tRNA(fMet) aminoacylation. In Clostridium tetani (strain Massachusetts / E88), this protein is Methionine--tRNA ligase.